The following is a 57-amino-acid chain: Aminopeptidase A (57 aa).

Residues 1–57 (YLTDHYFKVDLNSTVTQQRFLLDPSELAGITIMQPSDSNIEWLKQYRDDVATWLENS) are Extracellular-facing. A glycan (N-linked (GlcNAc...) asparagine) is linked at N12.

It belongs to the peptidase M1 family. Homodimer; disulfide-linked. Requires Zn(2+) as cofactor.

The protein resides in the cell membrane. The catalysed reaction is Release of N-terminal glutamate (and to a lesser extent aspartate) from a peptide.. With respect to regulation, inhibited by the aminopeptidase competitive inhibitors amastatin (Leu and acidic inhibitor), and bestatin (Leu inhibitor), by chelating agents EDTA, and 1,10-Phenanthroline, as well as by Zn(2+) ions. Substrate specificity is modulated by Ca(2+), Ba(2+), and Mn(2+) ions which enhances the enzymatic activity for cleavage of acidic residues. Venom protein that cleaves N-terminal acidic residues from peptides with high potency in presence of calcium. It may have several roles in venom including alteration of blood pressure by cleaving circulating angiotensin-2, general degradation of host tissue, increase of permeability to other venom components, and/or processing of other toxins in the venom. The protein is Aminopeptidase A of Gloydius blomhoffii (Mamushi).